The chain runs to 375 residues: Cyclic AMP receptor 2 (375 aa).

The Extracellular portion of the chain corresponds to 1–10 (MTIMSDIIAQ). A helical transmembrane segment spans residues 11–30 (RTILLIADFSSIIGCSLVLI). At 31-44 (GFWRLKLLRNHITK) the chain is on the cytoplasmic side. The helical transmembrane segment at 45-65 (IISLFCATSLFKDVISTIITL) threads the bilayer. Over 66–82 (LYKPDQTESGFPCYLHA) the chain is Extracellular. The helical transmembrane segment at 83 to 108 (IVITFGSLACWLWTLMLSFSIYNLIV) threads the bilayer. Topologically, residues 109-119 (RREPEPERFEK) are cytoplasmic. Residues 120-138 (FYFCLCYGLPLISTIVMLS) traverse the membrane as a helical segment. Topologically, residues 139 to 161 (THIIQPVGGWCWIGDNYDGYRFG) are extracellular. Residues 162–180 (LFYGPFFFIWGTSAILVGL) traverse the membrane as a helical segment. Residues 181–204 (TSKYTYSVIRSSVSDNKDKHMTYQ) lie on the Cytoplasmic side of the membrane. S192 is subject to Phosphoserine. A helical transmembrane segment spans residues 205-223 (FKLINYIVVFLVCWVFAIV). The Extracellular segment spans residues 224–234 (NRILNGLNQFP). A helical transmembrane segment spans residues 235–259 (TVPNVLHTYFSVSHGFYASITFIYN). The Cytoplasmic portion of the chain corresponds to 260–375 (NPLMWRYFGA…NNINNKNDMI (116 aa)). Phosphoserine is present on residues S298 and S303. A disordered region spans residues 338 to 375 (PKENENQNHHHHHHHHHHHNHYNNNNNNNNINNKNDMI). Positions 346–358 (HHHHHHHHHHHNH) are enriched in basic residues. A compositionally biased stretch (low complexity) spans 359-375 (YNNNNNNNNINNKNDMI).

Belongs to the G-protein coupled receptor 5 family. C-terminal Ser or Thr residues may be phosphorylated.

Its subcellular location is the membrane. Receptor for cAMP. Coordinates the aggregation of individual cells into a multicellular organism and regulates the expression of a large number of developmentally regulated genes. The activity of this receptor is mediated by G proteins. Plays a key role during tip formation and late development; involved in cAMP-directed patterning of pre stalk cells as they sort before and during tip formation. In Dictyostelium discoideum (Social amoeba), this protein is Cyclic AMP receptor 2 (carB).